Here is a 946-residue protein sequence, read N- to C-terminus: Protein translocase subunit SecA (946 aa).

Residues glutamine 90, 108 to 112 (GEGKT), and aspartate 509 each bind ATP.

The protein belongs to the SecA family. Monomer and homodimer. Part of the essential Sec protein translocation apparatus which comprises SecA, SecYEG and auxiliary proteins SecDF. Other proteins may also be involved.

It localises to the cell inner membrane. The protein resides in the cellular thylakoid membrane. It is found in the cytoplasm. It catalyses the reaction ATP + H2O + cellular proteinSide 1 = ADP + phosphate + cellular proteinSide 2.. Part of the Sec protein translocase complex. Interacts with the SecYEG preprotein conducting channel. Has a central role in coupling the hydrolysis of ATP to the transfer of proteins into and across the cell membrane, serving as an ATP-driven molecular motor driving the stepwise translocation of polypeptide chains across the membrane. In terms of biological role, probably participates in protein translocation into and across both the cytoplasmic and thylakoid membranes in cyanobacterial cells. The sequence is that of Protein translocase subunit SecA from Synechococcus sp. (strain RCC307).